We begin with the raw amino-acid sequence, 197 residues long: Glycerol-3-phosphate acyltransferase (197 aa).

The next 5 helical transmembrane spans lie at 7 to 27 (PSIA…LLLT), 56 to 76 (LAAL…WIAW), 82 to 102 (DIGW…WLGF), 116 to 136 (FGLG…MLAI), and 157 to 177 (YFGR…IIWL).

The protein belongs to the PlsY family. As to quaternary structure, probably interacts with PlsX.

Its subcellular location is the cell inner membrane. It catalyses the reaction an acyl phosphate + sn-glycerol 3-phosphate = a 1-acyl-sn-glycero-3-phosphate + phosphate. It functions in the pathway lipid metabolism; phospholipid metabolism. In terms of biological role, catalyzes the transfer of an acyl group from acyl-phosphate (acyl-PO(4)) to glycerol-3-phosphate (G3P) to form lysophosphatidic acid (LPA). This enzyme utilizes acyl-phosphate as fatty acyl donor, but not acyl-CoA or acyl-ACP. The chain is Glycerol-3-phosphate acyltransferase from Erythrobacter litoralis (strain HTCC2594).